The primary structure comprises 135 residues: Endoribonuclease YbeY (135 aa).

His-102, His-106, and His-112 together coordinate Zn(2+).

It belongs to the endoribonuclease YbeY family. The cofactor is Zn(2+).

It localises to the cytoplasm. Single strand-specific metallo-endoribonuclease involved in late-stage 70S ribosome quality control and in maturation of the 3' terminus of the 16S rRNA. This is Endoribonuclease YbeY from Rubrobacter xylanophilus (strain DSM 9941 / JCM 11954 / NBRC 16129 / PRD-1).